The sequence spans 514 residues: Maturase K (514 aa).

It belongs to the intron maturase 2 family. MatK subfamily.

It is found in the plastid. It localises to the chloroplast. Functionally, usually encoded in the trnK tRNA gene intron. Probably assists in splicing its own and other chloroplast group II introns. This chain is Maturase K, found in Acer monspessulanum (Montpellier maple).